Reading from the N-terminus, the 586-residue chain is A-type ATP synthase subunit A (586 aa).

232–239 (GPFGSGKT) lines the ATP pocket.

Belongs to the ATPase alpha/beta chains family. In terms of assembly, has multiple subunits with at least A(3), B(3), C, D, E, F, H, I and proteolipid K(x).

The protein resides in the cell membrane. The enzyme catalyses ATP + H2O + 4 H(+)(in) = ADP + phosphate + 5 H(+)(out). Functionally, component of the A-type ATP synthase that produces ATP from ADP in the presence of a proton gradient across the membrane. The A chain is the catalytic subunit. This chain is A-type ATP synthase subunit A, found in Methanococcus maripaludis (strain C5 / ATCC BAA-1333).